We begin with the raw amino-acid sequence, 88 residues long: EKC/KEOPS complex subunit SPAC4H3.13 (88 aa).

The protein belongs to the CTAG/PCC1 family. As to quaternary structure, component of the EKC/KEOPS complex composed of at least of SPAP27G11.07c/BUD32, cgi121, gon7, pgp2 and SPAC4H3.13/PCC1; the whole complex dimerizes.

The protein localises to the cytoplasm. Its subcellular location is the nucleus. The protein resides in the chromosome. It is found in the telomere. In terms of biological role, component of the EKC/KEOPS complex that is required for the formation of a threonylcarbamoyl group on adenosine at position 37 (t(6)A37) in tRNAs that read codons beginning with adenine. The complex is probably involved in the transfer of the threonylcarbamoyl moiety of threonylcarbamoyl-AMP (TC-AMP) to the N6 group of A37. SPAC4H3.13/PCC1 functions as a dimerization module for the complex. The EKC/KEOPS complex also promotes both telomere uncapping and telomere elongation. The complex is required for efficient recruitment of transcriptional coactivators. This chain is EKC/KEOPS complex subunit SPAC4H3.13, found in Schizosaccharomyces pombe (strain 972 / ATCC 24843) (Fission yeast).